Here is a 230-residue protein sequence, read N- to C-terminus: MVEYLPSTPRYLKVPLIILNVILWLLGLVLVIIGGICVGFFSRFKELQEVGGVSESIKSISVSLPAGVLSIGIFFMVLTVAGCIVAYKEKMVGLVFYTILMLVLLVVLIGIGGEALTYHNADIGIEIEDNWKNISYSNQSVVIKKLEQFFECCCFDESDLKLNCTALCPQDDQKNILYNGTFCYDVIFGAVNSKLYLVGSAGVAIGVIELVSLMFALFLIVRLYKSNSYR.

The Cytoplasmic portion of the chain corresponds to 1 to 20 (MVEYLPSTPRYLKVPLIILN). A helical membrane pass occupies residues 21–41 (VILWLLGLVLVIIGGICVGFF). Residues 42 to 65 (SRFKELQEVGGVSESIKSISVSLP) lie on the Extracellular side of the membrane. Residues 66–86 (AGVLSIGIFFMVLTVAGCIVA) traverse the membrane as a helical segment. Residues 87–90 (YKEK) are Cytoplasmic-facing. Residues 91–111 (MVGLVFYTILMLVLLVVLIGI) traverse the membrane as a helical segment. Residues 112 to 200 (GGEALTYHNA…VNSKLYLVGS (89 aa)) lie on the Extracellular side of the membrane. Asn-133, Asn-138, Asn-163, and Asn-179 each carry an N-linked (GlcNAc...) asparagine glycan. The helical transmembrane segment at 201 to 221 (AGVAIGVIELVSLMFALFLIV) threads the bilayer. Residues 222–230 (RLYKSNSYR) lie on the Cytoplasmic side of the membrane.

The protein belongs to the tetraspanin (TM4SF) family.

Its subcellular location is the membrane. The chain is Probable tetraspanin tspD (tspD) from Dictyostelium discoideum (Social amoeba).